The chain runs to 92 residues: Small ribosomal subunit protein uS19c (92 aa).

It belongs to the universal ribosomal protein uS19 family.

It localises to the plastid. The protein localises to the chloroplast. Protein S19 forms a complex with S13 that binds strongly to the 16S ribosomal RNA. This Oltmannsiellopsis viridis (Marine flagellate) protein is Small ribosomal subunit protein uS19c.